Consider the following 158-residue polypeptide: Disulfide bond formation protein B (158 aa).

Residues 1-7 (MKNSRPV) are Cytoplasmic-facing. A helical membrane pass occupies residues 8-24 (LFAVALASLLLLAVALY). Over 25-42 (LQHVENMLPCPLCVIQRY) the chain is Periplasmic. A disulfide bond links C34 and C37. A helical transmembrane segment spans residues 43–57 (AFAAIALICLVTAFR). The Cytoplasmic portion of the chain corresponds to 58-63 (TEVTAR). The helical transmembrane segment at 64–81 (IGAALAALASLAGAGVAG) threads the bilayer. Residues 82-136 (WHIYIKAHPTVSCGIDPLETSLNTIPTAKLLPFLLQADGLCTTEYAPIMGLSIPQ) lie on the Periplasmic side of the membrane. C94 and C122 are oxidised to a cystine. A helical membrane pass occupies residues 137–155 (WALVWFIVIALFLLHTAFR). The Cytoplasmic segment spans residues 156–158 (KKS).

This sequence belongs to the DsbB family.

It localises to the cell inner membrane. Required for disulfide bond formation in some periplasmic proteins. Acts by oxidizing the DsbA protein. The sequence is that of Disulfide bond formation protein B from Herminiimonas arsenicoxydans.